A 463-amino-acid polypeptide reads, in one-letter code: Phosphoglycerate transporter protein (463 aa).

Topologically, residues 1–29 (MLTILKTGQSAHKVPPEKVQATYGRYRIQ) are cytoplasmic. 12 consecutive transmembrane segments (helical) span residues 30–50 (ALLSVFLGYLAYYIVRNNFTL), 59–79 (LDLSATQIGLLSSCMLIAYGI), 106–126 (IVNVGLGFSSAFWIFAALVVF), 127–147 (NGLFQGMGVGPSFITIANWFP), 160–180 (ISHNVGGGIVAPIVGAAFAIL), 188–208 (ASYIVPACVAVIFALIVLVLG), 267–287 (VFVYMVRFGMISWLPIYLLTV), 297–317 (VAFLFFEWAAIPSTLLAGWLS), 326–346 (MPLAMICMALIFVCLIGYWKS), 349–369 (LLMVTIFAAIVGCLIYVPQFL), 391–411 (GFMSYIFGASLGTSLFGVMVD), and 413–433 (LGWYGGFYLLMGGIVCCILFC).

Belongs to the major facilitator superfamily. Organophosphate:Pi antiporter (OPA) (TC 2.A.1.4) family.

It localises to the cell inner membrane. Its function is as follows. The phosphoglycerate transporter protein is a part of the PGT transport system. It is the membrane bound transporter for phosphoglycerate into salmonella. The polypeptide is Phosphoglycerate transporter protein (pgtP) (Salmonella typhimurium (strain LT2 / SGSC1412 / ATCC 700720)).